A 432-amino-acid chain; its full sequence is Enolase (432 aa).

Q163 provides a ligand contact to (2R)-2-phosphoglycerate. The active-site Proton donor is the E205. Mg(2+)-binding residues include D241, E289, and D316. (2R)-2-phosphoglycerate is bound by residues K341, R370, S371, and K392. The active-site Proton acceptor is the K341.

This sequence belongs to the enolase family. Mg(2+) is required as a cofactor.

It is found in the cytoplasm. The protein localises to the secreted. The protein resides in the cell surface. It carries out the reaction (2R)-2-phosphoglycerate = phosphoenolpyruvate + H2O. It functions in the pathway carbohydrate degradation; glycolysis; pyruvate from D-glyceraldehyde 3-phosphate: step 4/5. In terms of biological role, catalyzes the reversible conversion of 2-phosphoglycerate (2-PG) into phosphoenolpyruvate (PEP). It is essential for the degradation of carbohydrates via glycolysis. The protein is Enolase of Treponema pallidum (strain Nichols).